Reading from the N-terminus, the 185-residue chain is MGRYSVEPDNATKSCKARGSNLRVHFKNTRETAQAIKRMSLRRAQRYLKNVIAKKEIVPFRRFNGGVGRKAQAKAWGCTQGRWPKKSAEFLWQLLRNAESNADYKGLDVDRLVIDHIQVNRAPKMRRRTYRAHGRINPYMSSPCHVEVILSEKEQVVAAPTPDEDAPKKKQSKKKMARQKLMQRD.

Residues 157-185 form a disordered region; that stretch reads VAAPTPDEDAPKKKQSKKKMARQKLMQRD. Residues 169 to 178 show a composition bias toward basic residues; that stretch reads KKQSKKKMAR.

The protein belongs to the universal ribosomal protein uL22 family.

The sequence is that of Large ribosomal subunit protein uL22 (RpL17) from Argas monolakensis (Mono lake bird tick).